The chain runs to 28 residues: Potassium channel toxin alpha-KTx 13.2 (28 aa).

3 disulfide bridges follow: C2–C19, C6–C24, and C10–C26. An interaction with Ca(2+)-activated K(+) channels region spans residues 17-24 (IKCINGSC).

It belongs to the short scorpion toxin superfamily. Potassium channel inhibitor family. Alpha-KTx 13 subfamily. Expressed by the venom gland.

It is found in the secreted. Potent and selective inhibitor of Kv1.2/KCNA2 potassium channels. The protein is Potassium channel toxin alpha-KTx 13.2 of Orthochirus scrobiculosus (Central Asian scorpion).